Reading from the N-terminus, the 126-residue chain is MAGGKCIALIAHDQKKDAMAEFARRNQDVLADWHIVATGTTGGRVLDACPDLKVTRLKSGPLGGDQQIGAMIATGDIDMLIFFIDPLTPMPHDVDVKALTRLAVLYDIPMALNEATAERLIKTLNH.

The MGS-like domain occupies 1–126 (MAGGKCIALI…AERLIKTLNH (126 aa)). Residues histidine 12, lysine 16, 38–41 (TGTT), and 59–60 (SG) each bind substrate. Aspartate 65 acts as the Proton donor/acceptor in catalysis. Residue histidine 92 participates in substrate binding.

Belongs to the methylglyoxal synthase family.

The catalysed reaction is dihydroxyacetone phosphate = methylglyoxal + phosphate. Catalyzes the formation of methylglyoxal from dihydroxyacetone phosphate. This is Methylglyoxal synthase from Rhizobium rhizogenes (strain K84 / ATCC BAA-868) (Agrobacterium radiobacter).